The sequence spans 316 residues: N-acetylmuramic acid 6-phosphate etherase (316 aa).

Positions Ile-68–Lys-231 constitute an SIS domain. Catalysis depends on Glu-96, which acts as the Proton donor. Glu-127 is an active-site residue.

Belongs to the GCKR-like family. MurNAc-6-P etherase subfamily. As to quaternary structure, homodimer.

It catalyses the reaction N-acetyl-D-muramate 6-phosphate + H2O = N-acetyl-D-glucosamine 6-phosphate + (R)-lactate. It participates in amino-sugar metabolism; N-acetylmuramate degradation. Functionally, specifically catalyzes the cleavage of the D-lactyl ether substituent of MurNAc 6-phosphate, producing GlcNAc 6-phosphate and D-lactate. This chain is N-acetylmuramic acid 6-phosphate etherase, found in Prochlorococcus marinus (strain MIT 9303).